The primary structure comprises 348 residues: Uroporphyrinogen decarboxylase (348 aa).

Residues arginine 27 to arginine 31, phenylalanine 46, aspartate 76, tyrosine 152, serine 207, and histidine 320 each bind substrate.

It belongs to the uroporphyrinogen decarboxylase family. In terms of assembly, homodimer.

Its subcellular location is the cytoplasm. The catalysed reaction is uroporphyrinogen III + 4 H(+) = coproporphyrinogen III + 4 CO2. It functions in the pathway porphyrin-containing compound metabolism; protoporphyrin-IX biosynthesis; coproporphyrinogen-III from 5-aminolevulinate: step 4/4. Its function is as follows. Catalyzes the decarboxylation of four acetate groups of uroporphyrinogen-III to yield coproporphyrinogen-III. This is Uroporphyrinogen decarboxylase from Bacillus cereus (strain AH820).